Here is a 362-residue protein sequence, read N- to C-terminus: MNIKSLLLGSAAALVAASGAQAADAIVAPEPEAVEYVRVCDAYGAGYFYIPGTETCLRVHGYVRYDVKGGDDVYSGTDRNGWDKSARFALRVSTGSETELGTLKTFTELRFNYAANNSGVDGKYGNETSSGTVMEFAYIQLGGLRVGIDESEFHTFTGYLGDVINDDVISAGSYRTGKISYTFTGGNGFSAVIALEQGGDNDGGYTGTTNYHIDGYMPDVVGGLKYAGGWGSIAGVVAYDSVIEEWAAKVRGDVNITDQFSVWLQGAYSSAATPDQNYGQWGGDWAVWGGLKYQATQKAAFNLQAAHDDWGKTAVTANVAYELVPGFTVTPEVSYTKFGGEWKNTVAEDNAWGGIVRFQRSF.

The first 22 residues, M1–A22, serve as a signal peptide directing secretion.

This sequence belongs to the alphaproteobacteria porin family. As to quaternary structure, homotrimer.

The protein resides in the cell outer membrane. Forms passive diffusion pores that allow small molecular weight hydrophilic materials across the outer membrane. The protein is Porin Omp2b (omp2b) of Brucella abortus (strain S19).